Here is a 62-residue protein sequence, read N- to C-terminus: Large ribosomal subunit protein bL32 (62 aa).

Positions 1–16 (MAVQKNRKTRSKRGMR) are enriched in basic residues. Positions 1–62 (MAVQKNRKTR…VISQGDSDDE (62 aa)) are disordered. Residues 53–62 (VISQGDSDDE) are compositionally biased toward polar residues.

Belongs to the bacterial ribosomal protein bL32 family.

The sequence is that of Large ribosomal subunit protein bL32 from Alcanivorax borkumensis (strain ATCC 700651 / DSM 11573 / NCIMB 13689 / SK2).